The sequence spans 293 residues: DNA-directed RNA polymerase III subunit RPC6 (293 aa).

The protein belongs to the eukaryotic RPC34/RPC39 RNA polymerase subunit family. Component of the RNA polymerase III (Pol III) complex consisting of 17 subunits.

Its subcellular location is the nucleus. In terms of biological role, DNA-dependent RNA polymerase catalyzes the transcription of DNA into RNA using the four ribonucleoside triphosphates as substrates. Specific peripheric component of RNA polymerase III which synthesizes small RNAs, such as 5S rRNA and tRNAs. This chain is DNA-directed RNA polymerase III subunit RPC6, found in Drosophila melanogaster (Fruit fly).